The chain runs to 86 residues: Toxin To8 (86 aa).

A signal peptide spans 1 to 20; that stretch reads MTRFVLFISCFFLIGMVVEC. The 63-residue stretch at 21–83 folds into the LCN-type CS-alpha/beta domain; it reads KEGYLLGSRG…LWESDTNECG (63 aa). Cystine bridges form between C31-C82, C35-C57, C43-C63, and C47-C65. At C82 the chain carries Cysteine amide.

Belongs to the long (4 C-C) scorpion toxin superfamily. Sodium channel inhibitor family. Beta subfamily. In terms of tissue distribution, expressed by the venom gland.

It is found in the secreted. Its function is as follows. Beta toxins bind voltage-independently at site-4 of sodium channels (Nav) and shift the voltage of activation toward more negative potentials thereby affecting sodium channel activation and promoting spontaneous and repetitive firing. In Tityus obscurus (Amazonian scorpion), this protein is Toxin To8.